The chain runs to 173 residues: Alpha-crystallin A chain (173 aa).

Residue Met-1 is modified to N-acetylmethionine. Residues 1-63 are required for complex formation with BFSP1 and BFSP2; during homooligomerization, mediates the association of 2 dimers to form a tetramer; it reads MDVTIQHPWF…RTVLDSGISE (63 aa). At Gln-6 the chain carries Deamidated glutamine; partial. A Phosphoserine modification is found at Ser-45. Residue Gln-50 is modified to Deamidated glutamine; partial. The 113-residue stretch at 52–164 folds into the sHSP domain; sequence LFRTVLDSGI…AERAIPVSRE (113 aa). Lys-70 carries the post-translational modification N6-acetyllysine. Deamidated glutamine; partial is present on Gln-90. N6-acetyllysine is present on Lys-99. Zn(2+) is bound at residue His-100. Asn-101 is subject to Deamidated asparagine; partial. Glu-102 and His-107 together coordinate Zn(2+). Residue Ser-122 is modified to Phosphoserine. Asn-123 carries the deamidated asparagine; partial modification. Cys-131 and Cys-142 are joined by a disulfide. Gln-147 carries the deamidated glutamine; partial modification. His-154 provides a ligand contact to Zn(2+). Ser-162 is a glycosylation site (O-linked (GlcNAc) serine).

This sequence belongs to the small heat shock protein (HSP20) family. In terms of assembly, heteropolymer composed of three CRYAA and one CRYAB subunits. Inter-subunit bridging via zinc ions enhances stability, which is crucial as there is no protein turn over in the lens. Can also form homodimers and homotetramers (dimers of dimers) which serve as the building blocks of homooligomers. Within homooligomers, the zinc-binding motif is created from residues of 3 different molecules. His-100 and Glu-102 from one molecule are ligands of the zinc ion, and His-107 and His-154 residues from additional molecules complete the site with tetrahedral coordination geometry. Part of a complex required for lens intermediate filament formation composed of BFSP1, BFSP2 and CRYAA. O-glycosylated; contains N-acetylglucosamine side chains. In terms of processing, deamidation of Asn-101 in lens occurs mostly during the first 30 years of age, followed by a small additional amount of deamidation (approximately 5%) during the next approximately 38 years, resulting in a maximum of approximately 50% deamidation during the lifetime of the individual. Post-translationally, phosphorylation on Ser-122 seems to be developmentally regulated. Absent in the first months of life, it appears during the first 12 years of human lifetime. The relative amount of phosphorylated form versus unphosphorylated form does not change over the lifetime of the individual. Acetylation at Lys-70 may increase chaperone activity. In terms of processing, undergoes age-dependent proteolytical cleavage at the C-terminus. Alpha-crystallin A(1-172) is the most predominant form produced most rapidly during the first 12 years of age and after this age is present in approximately 50% of the lens molecules. Post-translationally, in young individuals and during the first approximately 30 years of life, less than half molecules contain an intramolecular disulfide bond (oxidized form), while in the remaining fraction the cysteines are in the free sulfhydryl form (reduced form). With aging, the amount of oxidized form increases up to 90% and it becomes a major constituent of high molecular weight aggregates, concomitant with an age-dependent loss of its chaperone activity. The reduced form is undetectable in cataractous lenses. Expressed in the eye lens (at protein level).

It localises to the cytoplasm. Its subcellular location is the nucleus. In terms of biological role, contributes to the transparency and refractive index of the lens. In its oxidized form (absence of intramolecular disulfide bond), acts as a chaperone, preventing aggregation of various proteins under a wide range of stress conditions. Required for the correct formation of lens intermediate filaments as part of a complex composed of BFSP1, BFSP2 and CRYAA. The protein is Alpha-crystallin A chain (CRYAA) of Homo sapiens (Human).